The following is a 593-amino-acid chain: ABC transporter F family member 2 (593 aa).

Positions 1-10 are enriched in basic residues; sequence MAKKGGKNNK. The segment at 1–25 is disordered; sequence MAKKGGKNNKSKKEVTPPTSDVEDE. ABC transporter domains are found at residues 53–294 and 364–583; these read VKIE…VNQM and MHFD…RDLT. ATP-binding positions include 85-92 and 399-406; these read GQNGCGKS and GPNGAGKS.

Belongs to the ABC transporter superfamily. ABCF family. EF3 subfamily.

This is ABC transporter F family member 2 (abcF2) from Dictyostelium discoideum (Social amoeba).